The chain runs to 160 residues: Sulfur-rich protein (160 aa).

The next 2 membrane-spanning stretches (helical) occupy residues 63–83 and 92–112; these read ITMV…TFVL and FLFL…SVCM.

It localises to the membrane. This is Sulfur-rich protein (srp) from Chlamydophila psittaci (strain ATCC VR-125 / 6BC) (Chlamydia psittaci).